The chain runs to 202 residues: Large ribosomal subunit protein uL4 (202 aa).

A disordered region spans residues 45–71 (HAQKNRSEVSGSGKKPWRQKGTGRARV).

It belongs to the universal ribosomal protein uL4 family. As to quaternary structure, part of the 50S ribosomal subunit.

In terms of biological role, one of the primary rRNA binding proteins, this protein initially binds near the 5'-end of the 23S rRNA. It is important during the early stages of 50S assembly. It makes multiple contacts with different domains of the 23S rRNA in the assembled 50S subunit and ribosome. Functionally, forms part of the polypeptide exit tunnel. The chain is Large ribosomal subunit protein uL4 from Buchnera aphidicola subsp. Baizongia pistaciae (strain Bp).